A 200-amino-acid polypeptide reads, in one-letter code: Endoribonuclease YbeY (200 aa).

Positions 1–18 (MPADPALPDPVPPGPTAP) are enriched in pro residues. The tract at residues 1-22 (MPADPALPDPVPPGPTAPVPTD) is disordered. The Zn(2+) site is built by His151, His155, and His161.

The protein belongs to the endoribonuclease YbeY family. Requires Zn(2+) as cofactor.

It is found in the cytoplasm. In terms of biological role, single strand-specific metallo-endoribonuclease involved in late-stage 70S ribosome quality control and in maturation of the 3' terminus of the 16S rRNA. The sequence is that of Endoribonuclease YbeY from Rhodospirillum rubrum (strain ATCC 11170 / ATH 1.1.1 / DSM 467 / LMG 4362 / NCIMB 8255 / S1).